Here is a 461-residue protein sequence, read N- to C-terminus: Bifunctional protein HldE (461 aa).

The ribokinase stretch occupies residues 1-312 (MLEFLSQQKP…IKSFNRVDFE (312 aa)). Residue 191-194 (NKKE) coordinates ATP. D259 is a catalytic residue. The cytidylyltransferase stretch occupies residues 334 to 461 (FTNGCFDIVH…KIIEKIKDKK (128 aa)).

It in the N-terminal section; belongs to the carbohydrate kinase PfkB family. The protein in the C-terminal section; belongs to the cytidylyltransferase family. In terms of assembly, homodimer.

It carries out the reaction D-glycero-beta-D-manno-heptose 7-phosphate + ATP = D-glycero-beta-D-manno-heptose 1,7-bisphosphate + ADP + H(+). It catalyses the reaction D-glycero-beta-D-manno-heptose 1-phosphate + ATP + H(+) = ADP-D-glycero-beta-D-manno-heptose + diphosphate. Its pathway is nucleotide-sugar biosynthesis; ADP-L-glycero-beta-D-manno-heptose biosynthesis; ADP-L-glycero-beta-D-manno-heptose from D-glycero-beta-D-manno-heptose 7-phosphate: step 1/4. It functions in the pathway nucleotide-sugar biosynthesis; ADP-L-glycero-beta-D-manno-heptose biosynthesis; ADP-L-glycero-beta-D-manno-heptose from D-glycero-beta-D-manno-heptose 7-phosphate: step 3/4. Catalyzes the phosphorylation of D-glycero-D-manno-heptose 7-phosphate at the C-1 position to selectively form D-glycero-beta-D-manno-heptose-1,7-bisphosphate. Functionally, catalyzes the ADP transfer from ATP to D-glycero-beta-D-manno-heptose 1-phosphate, yielding ADP-D-glycero-beta-D-manno-heptose. In Campylobacter jejuni subsp. jejuni serotype O:6 (strain 81116 / NCTC 11828), this protein is Bifunctional protein HldE.